A 695-amino-acid chain; its full sequence is Phosphate acetyltransferase (695 aa).

The interval 372–695 (AFRYRLVKRA…LTAVQAASQR (324 aa)) is phosphate acetyltransferase.

It in the N-terminal section; belongs to the CobB/CobQ family. The protein in the C-terminal section; belongs to the phosphate acetyltransferase and butyryltransferase family. As to quaternary structure, homohexamer.

It is found in the cytoplasm. It carries out the reaction acetyl-CoA + phosphate = acetyl phosphate + CoA. It functions in the pathway metabolic intermediate biosynthesis; acetyl-CoA biosynthesis; acetyl-CoA from acetate: step 2/2. Involved in acetate metabolism. The protein is Phosphate acetyltransferase (pta) of Nitrosomonas europaea (strain ATCC 19718 / CIP 103999 / KCTC 2705 / NBRC 14298).